The primary structure comprises 198 residues: Armadillo repeat-containing protein 7 (198 aa).

2 ARM repeats span residues 57-99 and 100-140; these read QVLD…HAGG and VPLI…TATP. Ser-169 is subject to Phosphoserine.

As to quaternary structure, component of the minor spliceosome. Within this complex, interacts with RBM48.

As a component of the minor spliceosome, involved in the splicing of U12-type introns in pre-mRNAs. This is Armadillo repeat-containing protein 7 (ARMC7) from Homo sapiens (Human).